The chain runs to 98 residues: Cell cycle protein GpsB (98 aa).

The stretch at 34-72 (LDMVIKDYEAFHQEIEELQQENLQLKKQLEEANKRQPAQ) forms a coiled coil.

It belongs to the GpsB family. Forms polymers through the coiled coil domains. Interacts with PBP1, MreC and EzrA.

Its subcellular location is the cytoplasm. Divisome component that associates with the complex late in its assembly, after the Z-ring is formed, and is dependent on DivIC and PBP2B for its recruitment to the divisome. Together with EzrA, is a key component of the system that regulates PBP1 localization during cell cycle progression. Its main role could be the removal of PBP1 from the cell pole after pole maturation is completed. Also contributes to the recruitment of PBP1 to the division complex. Not essential for septum formation. The sequence is that of Cell cycle protein GpsB from Bacillus licheniformis (strain ATCC 14580 / DSM 13 / JCM 2505 / CCUG 7422 / NBRC 12200 / NCIMB 9375 / NCTC 10341 / NRRL NRS-1264 / Gibson 46).